A 476-amino-acid chain; its full sequence is MVSSKKTIDKNKTQVIGKIIQVLGPVVDVKFSENNIPKIYDALVVDNNGKKLVLEVEQNIGDEIVRTIAMGPTEGLRRGLDVINTNSPITAPVGNEVLGRMFNVLGDPIDEKPDLDVKRLPIHRDAPIYEELVTTTEILETGIKVIDLMIPFTKGGKVGLFGGAGVGKTILIQELINNIAKAHNGVSVFAGVGERTREGNDLYHEFIEAGVLNKTCLVFGQMNEPPGARMRVALTGLTIAEYFRDKKNMDVLLFIDNIFRFTQAGSEVSALLGRMPSAVGYQPTLSTEMGSLQERITSTKNGSITSVQAVYVPADDLTDPAPATTFTHLDARIVLDRSIASLGIYPAVDPLASSSRVLDPEIVGQEHYDIALKVQITLQKYQELQSIIAILGMDELSEEDKLIVQRARKIRNFLSQSFFVGEKFTGRPGVFVKVSDTVRSFKSILNGEVDHVPETYFLYSSTIDNVIEKYNKDKDK.

162 to 169 contributes to the ATP binding site; that stretch reads GGAGVGKT.

Belongs to the ATPase alpha/beta chains family. As to quaternary structure, F-type ATPases have 2 components, CF(1) - the catalytic core - and CF(0) - the membrane proton channel. CF(1) has five subunits: alpha(3), beta(3), gamma(1), delta(1), epsilon(1). CF(0) has three main subunits: a(1), b(2) and c(9-12). The alpha and beta chains form an alternating ring which encloses part of the gamma chain. CF(1) is attached to CF(0) by a central stalk formed by the gamma and epsilon chains, while a peripheral stalk is formed by the delta and b chains.

The protein resides in the cell membrane. The enzyme catalyses ATP + H2O + 4 H(+)(in) = ADP + phosphate + 5 H(+)(out). Functionally, produces ATP from ADP in the presence of a proton gradient across the membrane. The catalytic sites are hosted primarily by the beta subunits. The chain is ATP synthase subunit beta from Mycoplasma capricolum subsp. capricolum (strain California kid / ATCC 27343 / NCTC 10154).